A 434-amino-acid chain; its full sequence is Nicotinate phosphoribosyltransferase (434 aa).

H242 carries the phosphohistidine; by autocatalysis modification.

It belongs to the NAPRTase family. Post-translationally, transiently phosphorylated on a His residue during the reaction cycle. Phosphorylation strongly increases the affinity for substrates and increases the rate of nicotinate D-ribonucleotide production. Dephosphorylation regenerates the low-affinity form of the enzyme, leading to product release.

It catalyses the reaction nicotinate + 5-phospho-alpha-D-ribose 1-diphosphate + ATP + H2O = nicotinate beta-D-ribonucleotide + ADP + phosphate + diphosphate. Its pathway is cofactor biosynthesis; NAD(+) biosynthesis; nicotinate D-ribonucleotide from nicotinate: step 1/1. Catalyzes the synthesis of beta-nicotinate D-ribonucleotide from nicotinate and 5-phospho-D-ribose 1-phosphate at the expense of ATP. In Rhizobium rhizogenes (strain K84 / ATCC BAA-868) (Agrobacterium radiobacter), this protein is Nicotinate phosphoribosyltransferase.